The sequence spans 357 residues: Alanine racemase (357 aa).

Lys-33 serves as the catalytic Proton acceptor; specific for D-alanine. Lys-33 is modified (N6-(pyridoxal phosphate)lysine). Position 129 (Arg-129) interacts with substrate. Residue Tyr-253 is the Proton acceptor; specific for L-alanine of the active site. Met-301 contacts substrate.

This sequence belongs to the alanine racemase family. Requires pyridoxal 5'-phosphate as cofactor.

It catalyses the reaction L-alanine = D-alanine. It participates in amino-acid biosynthesis; D-alanine biosynthesis; D-alanine from L-alanine: step 1/1. In terms of biological role, catalyzes the interconversion of L-alanine and D-alanine. May also act on other amino acids. The protein is Alanine racemase (alr) of Pseudomonas fluorescens (strain ATCC BAA-477 / NRRL B-23932 / Pf-5).